Consider the following 531-residue polypeptide: Keratin, type II cytoskeletal 79 (531 aa).

Positions 1 to 12 (MRSSLSRQTFST) are enriched in polar residues. The tract at residues 1-55 (MRSSLSRQTFSTKGGFSSNSASGGGGSRMRTSYSSVTMSRGSGGGGGVRSGSSSG) is disordered. The segment at 1–138 (MRSSLSRQTF…DPEIQRVRTQ (138 aa)) is head. Residues 28–40 (RMRTSYSSVTMSR) are compositionally biased toward low complexity. Positions 41-55 (GSGGGGGVRSGSSSG) are enriched in gly residues. The segment at 139 to 174 (EREQIKTLNNKFASFIDKVRFLEQQNKVLETKWALL) is coil 1A. Residues 139–453 (EREQIKTLNN…KLLESEESRM (315 aa)) enclose the IF rod domain. Residues 175–194 (QEQSQNTGVARSLEPFFENY) are linker 1. Positions 195-286 (LSTLRRQLDT…QLFEMELSQV (92 aa)) are coil 1B. Residues 287 to 310 (QTNVSDTNVILSMDNNRNLDLDSI) form a linker 12 region. The tract at residues 311–449 (IAEVKAQYEL…ATYRKLLESE (139 aa)) is coil 2. A tail region spans residues 450 to 531 (ESRMSGDCPS…TTVKTSSRRY (82 aa)).

This sequence belongs to the intermediate filament family. As to quaternary structure, heterotetramer of two type I and two type II keratins.

This is Keratin, type II cytoskeletal 79 (Krt79) from Mus musculus (Mouse).